The following is a 103-amino-acid chain: Small ribosomal subunit protein uS10 (103 aa).

This sequence belongs to the universal ribosomal protein uS10 family. Part of the 30S ribosomal subunit.

Involved in the binding of tRNA to the ribosomes. The protein is Small ribosomal subunit protein uS10 of Escherichia coli O127:H6 (strain E2348/69 / EPEC).